The sequence spans 405 residues: Serpin I2 (405 aa).

An N-terminal signal peptide occupies residues 1-18 (MDTIFLWSLLLLFFGSQA). N-linked (GlcNAc...) asparagine glycosylation is found at N202, N207, and N306.

This sequence belongs to the serpin family. Expressed in pancreas and adipose tissues.

It is found in the secreted. The protein is Serpin I2 (SERPINI2) of Homo sapiens (Human).